The sequence spans 189 residues: GTPase NRas (189 aa).

10-17 contacts GTP; the sequence is GAGGVGKS. Positions 32–40 match the Effector region motif; the sequence is YDPTIEDSY. Residues 57-61 and 116-119 contribute to the GTP site; these read DTAGQ and NKCD. Residues 166–185 are hypervariable region; sequence YRMKKLNSNEDGNQGCMGLS. Cys-181 carries S-palmitoyl cysteine lipidation. Residue Cys-186 is the site of S-farnesyl cysteine attachment. Positions 187-189 are cleaved as a propeptide — removed in mature form; it reads IVM.

It belongs to the small GTPase superfamily. Ras family. In terms of processing, palmitoylated by the ZDHHC9-GOLGA7 complex. Depalmitoylated by ABHD17A, ABHD17B and ABHD17C. A continuous cycle of de- and re-palmitoylation regulates rapid exchange between plasma membrane and Golgi.

It is found in the cell membrane. The protein resides in the golgi apparatus membrane. It carries out the reaction GTP + H2O = GDP + phosphate + H(+). Its activity is regulated as follows. Alternates between an inactive form bound to GDP and an active form bound to GTP. Activated by a guanine nucleotide-exchange factor (GEF) and inactivated by a GTPase-activating protein (GAP). Its function is as follows. Ras proteins bind GDP/GTP and possess intrinsic GTPase activity. The sequence is that of GTPase NRas (NRAS) from Gallus gallus (Chicken).